A 430-amino-acid polypeptide reads, in one-letter code: Oleandomycin glycosyltransferase (430 aa).

The disordered stretch occupies residues 385-430 (GGTRRAADLIEAELPARHERQEPVGDRPNVGDRPAGVRSDRQRSAL). The segment covering 386–409 (GTRRAADLIEAELPARHERQEPVG) has biased composition (basic and acidic residues).

This sequence belongs to the UDP-glycosyltransferase family.

Functionally, specifically inactivates oleandomycin via 2'-O-glycosylation using UDP-glucose. The polypeptide is Oleandomycin glycosyltransferase (oleD) (Streptomyces antibioticus).